We begin with the raw amino-acid sequence, 155 residues long: MTAVLDTLVAVRRTAMDLLARREHGRVELTRKLRQRGAPPEMIEAALDRLTEEGLLSESRYLESFVSYRARSGYGPMRIREELGQRGLQRSDIDLALRECGIDWQEQLRDVWQRKFAGRFPADARERAKQGRFLSYRGYSMDMISRLLSGRGMDD.

Belongs to the RecX family.

The protein resides in the cytoplasm. In terms of biological role, modulates RecA activity. This is Regulatory protein RecX from Pseudomonas fluorescens (strain ATCC BAA-477 / NRRL B-23932 / Pf-5).